Reading from the N-terminus, the 423-residue chain is Glucose-1-phosphate adenylyltransferase 1 (423 aa).

Alpha-D-glucose 1-phosphate-binding positions include Y111, G176, E191–K192, and S209.

Belongs to the bacterial/plant glucose-1-phosphate adenylyltransferase family. In terms of assembly, homotetramer.

It catalyses the reaction alpha-D-glucose 1-phosphate + ATP + H(+) = ADP-alpha-D-glucose + diphosphate. The protein operates within glycan biosynthesis; glycogen biosynthesis. Its function is as follows. Involved in the biosynthesis of ADP-glucose, a building block required for the elongation reactions to produce glycogen. Catalyzes the reaction between ATP and alpha-D-glucose 1-phosphate (G1P) to produce pyrophosphate and ADP-Glc. This is Glucose-1-phosphate adenylyltransferase 1 from Alkalilimnicola ehrlichii (strain ATCC BAA-1101 / DSM 17681 / MLHE-1).